Here is a 169-residue protein sequence, read N- to C-terminus: Peptide deformylase (169 aa).

Positions 91 and 133 each coordinate Fe cation. Glu134 is a catalytic residue. Residue His137 participates in Fe cation binding.

This sequence belongs to the polypeptide deformylase family. It depends on Fe(2+) as a cofactor.

It carries out the reaction N-terminal N-formyl-L-methionyl-[peptide] + H2O = N-terminal L-methionyl-[peptide] + formate. Its function is as follows. Removes the formyl group from the N-terminal Met of newly synthesized proteins. Requires at least a dipeptide for an efficient rate of reaction. N-terminal L-methionine is a prerequisite for activity but the enzyme has broad specificity at other positions. The polypeptide is Peptide deformylase (Klebsiella pneumoniae (strain 342)).